The sequence spans 436 residues: GTPase Der (436 aa).

EngA-type G domains follow at residues 3–168 (PLIA…PESD) and 177–352 (IRLA…DNRA). Residues 9 to 16 (GRPNVGKS), 56 to 60 (DTGGY), 120 to 123 (NKVE), 183 to 190 (GRPNVGKS), 230 to 234 (DTAGL), and 295 to 298 (NKWD) each bind GTP. In terms of domain architecture, KH-like spans 353 to 436 (RKISTSALNR…VTISLRFLQK (84 aa)).

The protein belongs to the TRAFAC class TrmE-Era-EngA-EngB-Septin-like GTPase superfamily. EngA (Der) GTPase family. Associates with the 50S ribosomal subunit.

In terms of biological role, GTPase that plays an essential role in the late steps of ribosome biogenesis. The polypeptide is GTPase Der (Chlorobium phaeovibrioides (strain DSM 265 / 1930) (Prosthecochloris vibrioformis (strain DSM 265))).